The primary structure comprises 428 residues: Proteinase-activated receptor 1 (428 aa).

The N-terminal stretch at 1–21 (MGPQRLLLVAAGLSLCGPLLS) is a signal peptide. The propeptide at 22 to 41 (SRVPVRQPESEMTDATVNPR) is removed for receptor activation. The Extracellular portion of the chain corresponds to 42–105 (SFFLRNPGEN…SGYLTSPWLR (64 aa)). Asn65 and Asn78 each carry an N-linked (GlcNAc...) asparagine glycan. The helical transmembrane segment at 106–131 (LFIPSVYTFVFVVSLPLNILAIAVFV) threads the bilayer. Topologically, residues 132-140 (LKMKVKKPA) are cytoplasmic. The chain crosses the membrane as a helical span at residues 141–160 (VVYMLHLAMADVLFVSVLPL). The Extracellular segment spans residues 161–179 (KISYYFSGSDWQFGSGMCR). Residues Cys178 and Cys257 are joined by a disulfide bond. The chain crosses the membrane as a helical span at residues 180–201 (FATAAFYCNMYASIMLMTVISI). Residues 202 to 221 (DRFLAVVYPIQSLSWRTLGR) are Cytoplasmic-facing. A helical membrane pass occupies residues 222–242 (ANFTCLVIWVMAIMGVVPLLL). At 243-271 (KEQTTRVPGLNITTCHDVLNETLLQGFYS) the chain is on the extracellular side. Asn253 and Asn262 each carry an N-linked (GlcNAc...) asparagine glycan. The helical transmembrane segment at 272 to 291 (YYFSAFSAVFFLVPLIISTI) threads the bilayer. At 292–314 (CYMSIIRCLSSSSVANRSKKSRA) the chain is on the cytoplasmic side. The helical transmembrane segment at 315–337 (LFLSAAVFCVFIVCFGPTNVLLI) threads the bilayer. Residues 338 to 352 (MHYLLLSDSPATEKA) lie on the Extracellular side of the membrane. Residues 353-377 (YFAYLLCVCVSSVSCCIDPLIYYYA) form a helical membrane-spanning segment. Topologically, residues 378-428 (SSECQRHLYGILCCKESSDPNSYNSTGQLMPSKMDTCSSHLNNSIYKKLLA) are cytoplasmic. Residue Ser421 is modified to Phosphoserine.

It belongs to the G-protein coupled receptor 1 family. Proteolytic cleavage by thrombin generates a new N-terminus that functions as a tethered ligand. Also proteolytically cleaved by cathepsin CTSG. In terms of processing, phosphorylated in the C-terminal tail; probably mediating desensitization prior to the uncoupling and internalization of the receptor.

Its subcellular location is the cell membrane. In terms of biological role, high affinity receptor that binds the activated thrombin, leading to calcium release from intracellular stores. The thrombin-activated receptor signaling pathway is mediated through PTX-insensitive G proteins, activation of phospholipase C resulting in the production of 1D-myo-inositol 1,4,5-trisphosphate (InsP3) which binds to InsP3 receptors causing calcium release from the stores. In astrocytes, the calcium released into the cytosol allows the Ca(2+)-dependent release of L-glutamate into the synaptic cleft through BEST1, that targets the neuronal postsynaptic GRIN2A/NMDAR receptor resulting in the synaptic plasticity regulation. May play a role in platelets activation and in vascular development. Mediates up-regulation of pro-inflammatory cytokines, such as MCP-1/CCL2 and IL6, triggered by coagulation factor Xa (F10) in cardiac fibroblasts and umbilical vein endothelial cells. This chain is Proteinase-activated receptor 1, found in Cricetulus longicaudatus (Long-tailed dwarf hamster).